The following is a 158-amino-acid chain: NADH-quinone oxidoreductase subunit B 2 (158 aa).

[4Fe-4S] cluster contacts are provided by Cys-37, Cys-38, Cys-102, and Cys-132.

Belongs to the complex I 20 kDa subunit family. NDH-1 is composed of 14 different subunits. Subunits NuoB, C, D, E, F, and G constitute the peripheral sector of the complex. The cofactor is [4Fe-4S] cluster.

The protein localises to the cell inner membrane. The catalysed reaction is a quinone + NADH + 5 H(+)(in) = a quinol + NAD(+) + 4 H(+)(out). Its function is as follows. NDH-1 shuttles electrons from NADH, via FMN and iron-sulfur (Fe-S) centers, to quinones in the respiratory chain. Couples the redox reaction to proton translocation (for every two electrons transferred, four hydrogen ions are translocated across the cytoplasmic membrane), and thus conserves the redox energy in a proton gradient. The sequence is that of NADH-quinone oxidoreductase subunit B 2 from Acidithiobacillus ferrooxidans (strain ATCC 53993 / BNL-5-31) (Leptospirillum ferrooxidans (ATCC 53993)).